The chain runs to 593 residues: ATP-dependent lipid A-core flippase (593 aa).

Helical transmembrane passes span 33–53, 75–95, 137–157, 164–184, 262–282, and 292–312; these read IGIVVLAVVTMGVVAATEAGI, WYVPIAVIGLALVRGVSQYTS, AIVFEVNQILSVLTGVMVTLV, IFLLGYLFYLNWRLTLIVAVI, QPLTQFLASIALAVVITIAVV, and GGFVAFVTSMLLVISPLKHLI. The ABC transmembrane type-1 domain maps to 37 to 320; it reads VLAVVTMGVV…LIDVNQPLQR (284 aa). Residues 352–586 form the ABC transporter domain; the sequence is IEFRAVSFDY…GGLYAHLHRI (235 aa). 386–393 is a binding site for ATP; it reads GPSGSGKT.

This sequence belongs to the ABC transporter superfamily. Lipid exporter (TC 3.A.1.106) family. In terms of assembly, homodimer.

It is found in the cell inner membrane. It catalyses the reaction ATP + H2O + lipid A-core oligosaccharideSide 1 = ADP + phosphate + lipid A-core oligosaccharideSide 2.. Involved in lipopolysaccharide (LPS) biosynthesis. Translocates lipid A-core from the inner to the outer leaflet of the inner membrane. Transmembrane domains (TMD) form a pore in the inner membrane and the ATP-binding domain (NBD) is responsible for energy generation. In Burkholderia orbicola (strain AU 1054), this protein is ATP-dependent lipid A-core flippase.